Consider the following 169-residue polypeptide: Keratin-associated protein 9-7 (169 aa).

17 tandem repeats follow at residues 8 to 12, 13 to 17, 32 to 36, 37 to 41, 46 to 50, 51 to 55, 56 to 60, 61 to 65, 75 to 79, 80 to 84, 85 to 89, 90 to 94, 100 to 104, 139 to 143, 144 to 148, 149 to 153, and 163 to 167. The segment at 8-167 is 17 X 5 AA repeats of C-C-[VGSREQH]-[SQTPN]-[STPAI]; it reads CCQPTCCRTT…TCVTSCCQPA (160 aa).

This sequence belongs to the KRTAP type 9 family. Interacts with hair keratins.

In terms of biological role, in the hair cortex, hair keratin intermediate filaments are embedded in an interfilamentous matrix, consisting of hair keratin-associated proteins (KRTAP), which are essential for the formation of a rigid and resistant hair shaft through their extensive disulfide bond cross-linking with abundant cysteine residues of hair keratins. The matrix proteins include the high-sulfur and high-glycine-tyrosine keratins. This chain is Keratin-associated protein 9-7, found in Homo sapiens (Human).